Here is a 231-residue protein sequence, read N- to C-terminus: Aspartate/glutamate leucyltransferase (231 aa).

It belongs to the R-transferase family. Bpt subfamily.

The protein resides in the cytoplasm. It catalyses the reaction N-terminal L-glutamyl-[protein] + L-leucyl-tRNA(Leu) = N-terminal L-leucyl-L-glutamyl-[protein] + tRNA(Leu) + H(+). The catalysed reaction is N-terminal L-aspartyl-[protein] + L-leucyl-tRNA(Leu) = N-terminal L-leucyl-L-aspartyl-[protein] + tRNA(Leu) + H(+). Its function is as follows. Functions in the N-end rule pathway of protein degradation where it conjugates Leu from its aminoacyl-tRNA to the N-termini of proteins containing an N-terminal aspartate or glutamate. This is Aspartate/glutamate leucyltransferase from Pseudoalteromonas atlantica (strain T6c / ATCC BAA-1087).